The following is a 314-amino-acid chain: tRNA-cytidine(32) 2-sulfurtransferase (314 aa).

A PP-loop motif motif is present at residues 57-62 (SGGKDS). [4Fe-4S] cluster contacts are provided by Cys132, Cys135, and Cys223.

The protein belongs to the TtcA family. In terms of assembly, homodimer. Mg(2+) is required as a cofactor. [4Fe-4S] cluster serves as cofactor.

The protein resides in the cytoplasm. It carries out the reaction cytidine(32) in tRNA + S-sulfanyl-L-cysteinyl-[cysteine desulfurase] + AH2 + ATP = 2-thiocytidine(32) in tRNA + L-cysteinyl-[cysteine desulfurase] + A + AMP + diphosphate + H(+). It participates in tRNA modification. Its function is as follows. Catalyzes the ATP-dependent 2-thiolation of cytidine in position 32 of tRNA, to form 2-thiocytidine (s(2)C32). The sulfur atoms are provided by the cysteine/cysteine desulfurase (IscS) system. This is tRNA-cytidine(32) 2-sulfurtransferase from Alkalilimnicola ehrlichii (strain ATCC BAA-1101 / DSM 17681 / MLHE-1).